Reading from the N-terminus, the 663-residue chain is Protein-arginine deiminase type-1 (663 aa).

Ca(2+) is bound by residues Asn153, Asp155, Asp157, Asp165, Asp176, Asp179, Gln351, Glu353, Lys364, Asp371, Ser372, Asn375, Phe409, and Leu412. Cys645 acts as the Nucleophile in catalysis.

The protein belongs to the protein arginine deiminase family. Monomer. Requires Ca(2+) as cofactor. In terms of tissue distribution, detected in epidermal keratinocytes (at protein level). Epidermis, prostate, testis, placenta, spleen and thymus.

The protein localises to the cytoplasm. The catalysed reaction is L-arginyl-[protein] + H2O = L-citrullyl-[protein] + NH4(+). Its function is as follows. Catalyzes the deimination of arginine residues of proteins. The sequence is that of Protein-arginine deiminase type-1 (PADI1) from Homo sapiens (Human).